The primary structure comprises 1180 residues: Polyamine-transporting ATPase 13A2 (1180 aa).

Residues 1–44 lie on the Cytoplasmic side of the membrane; it reads MSADSSPLVGSTPTGYGTLTIGTSIDPLSSSVSSVRLSGYCGSP. An intramembrane segment occupies 45–65; that stretch reads WRVIGYHVVVWMMAGIPLLLF. Over 66–235 the chain is Cytoplasmic; the sequence is RWKPLWGVRL…KSYPQLLVDE (170 aa). S151 is modified (phosphoserine). A helical membrane pass occupies residues 236–253; the sequence is ALNPYYGFQAFSIALWLA. Residues 254 to 256 lie on the Lumenal side of the membrane; that stretch reads DHY. The chain crosses the membrane as a helical span at residues 257 to 276; sequence YWYALCIFLISSISICLSLY. Residues 277 to 427 are Cytoplasmic-facing; it reads KTRKQSQTLR…NFKFYKHSMK (151 aa). The helical transmembrane segment at 428–448 threads the bilayer; it reads FVAALSVLALLGTIYSIFILY. Residues 449–463 are Lumenal-facing; it reads RNRVPLNEIVIRALD. Residues 464-484 form a helical membrane-spanning segment; it reads LVTVVVPPALPAAMTVCTLYA. The Cytoplasmic portion of the chain corresponds to 485 to 930; sequence QSRLRRQGIF…REGRCSLDTS (446 aa). Residue D513 is the 4-aspartylphosphate intermediate of the active site. Residues D878 and D882 each coordinate Mg(2+). The helical transmembrane segment at 931 to 951 threads the bilayer; the sequence is FSVFKYMALYSLTQFISVLIL. Over 952–957 the chain is Lumenal; it reads YTINTN. A helical transmembrane segment spans residues 958 to 978; it reads LGDLQFLAIDLVITTTVAVLM. Topologically, residues 979–994 are cytoplasmic; the sequence is SRTGPALVLGRVRPPG. The chain crosses the membrane as a helical span at residues 995-1015; that stretch reads ALLSVPVLSSLLLQMVLVTGV. Over 1016–1048 the chain is Lumenal; sequence QLGGYFLTLAQPWFVPLNRTVAAPDNLPNYENT. N1033 carries an N-linked (GlcNAc...) asparagine glycan. A helical transmembrane segment spans residues 1049–1069; that stretch reads VVFSLSSFQYLILAAAVSKGA. Topologically, residues 1070–1080 are cytoplasmic; the sequence is PFRRPLYTNVP. The chain crosses the membrane as a helical span at residues 1081–1101; the sequence is FLVALALLSSVLVGLVLVPGL. Over 1102–1117 the chain is Lumenal; the sequence is LQGPLALRNITDTGFK. An N-linked (GlcNAc...) asparagine glycan is attached at N1110. Residues 1118–1138 form a helical membrane-spanning segment; the sequence is LLLLGLVTLNFVGAFMLESVL. Topologically, residues 1139 to 1180 are cytoplasmic; that stretch reads DQCLPACLRRLRPKRASKKRFKQLERELAEQPWPPLPAGPLR.

This sequence belongs to the cation transport ATPase (P-type) (TC 3.A.3) family. Type V subfamily. In terms of assembly, interacts with MYCBP2; the interaction inhibits the ubiquitination of TSC2 by MYCBP2. Interacts with HDAC6; the interaction results in recruitment of HDAC6 to lysosomes to promote CTTN deacetylation. Autophosphorylated. Accumulates in an inactive autophosphorylated state and autophosphorylation is stimulated by phosphatidic acid and phosphatidylinositol 3,5-bisphosphate but not by Mn(2+) or Zn(2+). The presence of spermine results in a dose-dependent reduction in autophosphorylation. Expressed in brain; protein levels are markedly increased in brain from subjects with Parkinson disease and subjects with dementia with Lewy bodies. Detected in pyramidal neurons located throughout the cingulate cortex (at protein level). In the substantia nigra, it is found in neuromelanin-positive dopaminergic neurons (at protein level).

It localises to the lysosome membrane. The protein localises to the late endosome membrane. It is found in the endosome. Its subcellular location is the multivesicular body membrane. The protein resides in the cytoplasmic vesicle. It localises to the autophagosome membrane. It carries out the reaction spermidine(out) + ATP + H2O = spermidine(in) + ADP + phosphate + H(+). It catalyses the reaction spermine(out) + ATP + H2O = spermine(in) + ADP + phosphate + H(+). With respect to regulation, accumulates in an inactive autophosphorylated state. The presence of spermine results in a dose-dependent reduction in autophosphorylation. In terms of biological role, ATPase which acts as a lysosomal polyamine exporter with high affinity for spermine. Also stimulates cellular uptake of polyamines and protects against polyamine toxicity. Plays a role in intracellular cation homeostasis and the maintenance of neuronal integrity. Contributes to cellular zinc homeostasis. Confers cellular protection against Mn(2+) and Zn(2+) toxicity and mitochondrial stress. Required for proper lysosomal and mitochondrial maintenance. Regulates the autophagy-lysosome pathway through the control of SYT11 expression at both transcriptional and post-translational levels. Facilitates recruitment of deacetylase HDAC6 to lysosomes to deacetylate CTTN, leading to actin polymerization, promotion of autophagosome-lysosome fusion and completion of autophagy. Promotes secretion of exosomes as well as secretion of SCNA via exosomes. Plays a role in lipid homeostasis. This chain is Polyamine-transporting ATPase 13A2, found in Homo sapiens (Human).